The following is a 661-amino-acid chain: UvrABC system protein B (661 aa).

The 387-residue stretch at 28-414 folds into the Helicase ATP-binding domain; sequence DGVNEGKRHQ…HTDEMVEQII (387 aa). 41–48 contacts ATP; it reads GATGTGKT. Positions 94 to 117 match the Beta-hairpin motif; the sequence is YYDYYQPEAYVPSTDTFIEKDASI. One can recognise a Helicase C-terminal domain in the interval 432–598; sequence QIDDLLSEIQ…TINKKIHDVI (167 aa). A disordered region spans residues 603-624; that stretch reads ESDETNQQQQTELPKKMTKKER. The region spanning 625–660 is the UVR domain; the sequence is QKTIENIEKEMKKAAKDLDFEKATELRDMLFELKAE.

Belongs to the UvrB family. Forms a heterotetramer with UvrA during the search for lesions. Interacts with UvrC in an incision complex.

Its subcellular location is the cytoplasm. The UvrABC repair system catalyzes the recognition and processing of DNA lesions. A damage recognition complex composed of 2 UvrA and 2 UvrB subunits scans DNA for abnormalities. Upon binding of the UvrA(2)B(2) complex to a putative damaged site, the DNA wraps around one UvrB monomer. DNA wrap is dependent on ATP binding by UvrB and probably causes local melting of the DNA helix, facilitating insertion of UvrB beta-hairpin between the DNA strands. Then UvrB probes one DNA strand for the presence of a lesion. If a lesion is found the UvrA subunits dissociate and the UvrB-DNA preincision complex is formed. This complex is subsequently bound by UvrC and the second UvrB is released. If no lesion is found, the DNA wraps around the other UvrB subunit that will check the other stand for damage. This Staphylococcus epidermidis (strain ATCC 35984 / DSM 28319 / BCRC 17069 / CCUG 31568 / BM 3577 / RP62A) protein is UvrABC system protein B.